Consider the following 598-residue polypeptide: Elongation factor 4 (598 aa).

Residues 4–186 (SRLRNFSIIA…EIVKKIPPPK (183 aa)) form the tr-type G domain. GTP is bound by residues 16–21 (DHGKST) and 133–136 (NKID).

It belongs to the TRAFAC class translation factor GTPase superfamily. Classic translation factor GTPase family. LepA subfamily.

It localises to the cell inner membrane. The catalysed reaction is GTP + H2O = GDP + phosphate + H(+). Required for accurate and efficient protein synthesis under certain stress conditions. May act as a fidelity factor of the translation reaction, by catalyzing a one-codon backward translocation of tRNAs on improperly translocated ribosomes. Back-translocation proceeds from a post-translocation (POST) complex to a pre-translocation (PRE) complex, thus giving elongation factor G a second chance to translocate the tRNAs correctly. Binds to ribosomes in a GTP-dependent manner. In Pelobacter propionicus (strain DSM 2379 / NBRC 103807 / OttBd1), this protein is Elongation factor 4.